The primary structure comprises 139 residues: Nucleoside diphosphate kinase (139 aa).

ATP is bound by residues Lys-11, Phe-59, Arg-87, Thr-93, Arg-104, and Asn-114. Catalysis depends on His-117, which acts as the Pros-phosphohistidine intermediate.

It belongs to the NDK family. In terms of assembly, homotetramer. Requires Mg(2+) as cofactor.

Its subcellular location is the cytoplasm. It carries out the reaction a 2'-deoxyribonucleoside 5'-diphosphate + ATP = a 2'-deoxyribonucleoside 5'-triphosphate + ADP. The catalysed reaction is a ribonucleoside 5'-diphosphate + ATP = a ribonucleoside 5'-triphosphate + ADP. Its function is as follows. Major role in the synthesis of nucleoside triphosphates other than ATP. The ATP gamma phosphate is transferred to the NDP beta phosphate via a ping-pong mechanism, using a phosphorylated active-site intermediate. This is Nucleoside diphosphate kinase from Wolbachia pipientis wMel.